The primary structure comprises 146 residues: Small ribosomal subunit protein uS13 (146 aa).

Positions 119–146 (ARGKKVRGQRTRSTGRKGRTVGVVRRKR) are disordered.

It belongs to the universal ribosomal protein uS13 family. As to quaternary structure, part of the 30S ribosomal subunit. Forms a loose heterodimer with protein S19. Forms two bridges to the 50S subunit in the 70S ribosome.

Located at the top of the head of the 30S subunit, it contacts several helices of the 16S rRNA. In the 70S ribosome it contacts the 23S rRNA (bridge B1a) and protein L5 of the 50S subunit (bridge B1b), connecting the 2 subunits; these bridges are implicated in subunit movement. This chain is Small ribosomal subunit protein uS13, found in Archaeoglobus fulgidus (strain ATCC 49558 / DSM 4304 / JCM 9628 / NBRC 100126 / VC-16).